A 1771-amino-acid chain; its full sequence is Kinase D-interacting substrate of 220 kDa (1771 aa).

Topologically, residues 1 to 499 are cytoplasmic; that stretch reads MSVLISQSVI…QIEPLFQFSW (499 aa). 12 ANK repeats span residues 4 to 33, 37 to 66, 70 to 99, 103 to 132, 136 to 165, 169 to 198, 202 to 231, 235 to 264, 268 to 297, 301 to 330, 334 to 363, and 367 to 396; these read LISQ…DVDE, CGQT…NCNL, DNWT…NLEH, GGWT…NPSV, YSVY…KVNC, YGTT…DVDQ, NSMT…NVNL, DGNT…YVNI, SGDT…DIDI, DNKT…DTEI, DGET…KVSA, and KGDT…DGRL. Residues 440 to 953 form the KAP NTPase domain; it reads YDLYSSALAD…NIVSVTGRLL (514 aa). A helical membrane pass occupies residues 500–520; the sequence is LIVFLTLLLCGGLGLLFAFTV. Residues 521–524 lie on the Extracellular side of the membrane; that stretch reads HPNL. A helical membrane pass occupies residues 525–545; it reads GIAVSLSFLALLYIFFIVIYF. Topologically, residues 546 to 659 are cytoplasmic; the sequence is GGRREGESWN…KWKKTCCLPS (114 aa). A helical membrane pass occupies residues 660–680; that stretch reads FVIFLFIIGCIISGITLLAIF. Residues 681-685 are Extracellular-facing; that stretch reads RVDPK. The helical transmembrane segment at 686–706 threads the bilayer; sequence HLTVNAVLISIASVVGLAFVL. Residues 707–1771 are Cytoplasmic-facing; it reads NCRTWWQVLD…GFGEERESIL (1065 aa). 2 positions are modified to phosphoserine: S882 and S885. T914 bears the Phosphothreonine mark. S918 is modified (phosphoserine). The segment at 1089 to 1092 is mediates interaction with CRKL; the sequence is PRAP. Residue S1163 is modified to Phosphoserine. 4 disordered regions span residues 1182–1202, 1285–1310, 1344–1368, and 1397–1564; these read DAAE…PAPG, PEDP…RASH, RHSN…SQDS, and LEGG…EPIR. Phosphoserine occurs at positions 1296, 1352, 1359, 1361, 1362, and 1365. A compositionally biased stretch (polar residues) spans 1346–1358; it reads SNLSWQSQTRRTP. Positions 1359–1368 are enriched in low complexity; sequence SLSSLNSQDS. The segment covering 1403–1430 has biased composition (polar residues); sequence STTISGRSSPHSTYYMGQSSSGGSIHSN. The segment covering 1431-1457 has biased composition (basic and acidic residues); that stretch reads LEQEKGKDSEPKPDDGRKSFLMKRGDV. The segment covering 1460–1470 has biased composition (polar residues); it reads YSSSGVSTNDA. Residues S1521, S1526, S1555, and S1574 each carry the phosphoserine modification. The segment covering 1522 to 1532 has biased composition (acidic residues); that stretch reads DEDESGTEESD. The span at 1537 to 1561 shows a compositional bias: basic and acidic residues; the sequence is LKDDKDRKAEGKVERVPKSPEHSAE. Positions 1578–1633 are disordered; the sequence is LDKKDSSDSGVRSSESSPNHSLHNEVADDSQLEKANLIELEDDSHSGKRGIPHSLS. Residues 1585 to 1594 are compositionally biased toward low complexity; sequence DSGVRSSESS. Phosphoserine occurs at positions 1623 and 1633. T1679 is subject to Phosphothreonine. Residue S1681 is modified to Phosphoserine. T1684 is modified (phosphothreonine). The span at 1713–1731 shows a compositional bias: polar residues; the sequence is LRPSSSPNPTTIQNENLKS. The segment at 1713 to 1771 is disordered; sequence LRPSSSPNPTTIQNENLKSMTHKRSQRSSYTRLSKDPPELHAAASSESTGFGEERESIL. The short motif at 1766 to 1771 is the PDZ-binding element; the sequence is ERESIL.

In terms of assembly, found in a complex, at least composed of KIDINS220, MAGI2, NTRK1 and RAPGEF2; the complex is mainly formed at late endosomes in a nerve growth factor (NGF)-dependent manner. Interacts with RAPGEF2; the interaction is strengthened after NGF stimulation. Isoform 2 interacts (via C-terminal domain) with MAGI2 isoform 1 (via PDZ domain). Interacts with NTRK1, NTRK2, NTRK3, ERKL and NGFR. Can form a ternary complex with NGFR and NTRK1 and this complex is affected by the expression levels of KIDINS220/ARMS. An increase in KIDINS220/ARMS expression leads to a decreased association of NGFR and NTRK1. Interacts (via PDZ-binding motif) with SNTA1 and SNTB2 (via PDZ domains). Interacts with EPHA4 and PRKD1. Tyrosine phosphorylated by NTRK1, NTRK2, EPHB2 and EPHA4. Phosphorylation at Ser-918 is induced by phorbol ester treatment. Phosphorylation by NTRK2 is induced by brain-derived neurotrophic factor (BDNF) and neurotrophin-4/5. Phosphorylation by NTRK1 is induced by nerve growth factor (NGF). As to expression, abundant in developing and adult neural tissues as well as neuroendocrine cells and dendritic cells. Overexpressed in melanoma and melanoma cell lines.

It is found in the membrane. It localises to the late endosome. Functionally, promotes a prolonged MAP-kinase signaling by neurotrophins through activation of a Rap1-dependent mechanism. Provides a docking site for the CRKL-C3G complex, resulting in Rap1-dependent sustained ERK activation. May play an important role in regulating postsynaptic signal transduction through the syntrophin-mediated localization of receptor tyrosine kinases such as EPHA4. In cooperation with SNTA1 can enhance EPHA4-induced JAK/STAT activation. Plays a role in nerve growth factor (NGF)-induced recruitment of RAPGEF2 to late endosomes and neurite outgrowth. May play a role in neurotrophin- and ephrin-mediated neuronal outgrowth and in axon guidance during neural development and in neuronal regeneration. Modulates stress-induced apoptosis of melanoma cells via regulation of the MEK/ERK signaling pathway. The protein is Kinase D-interacting substrate of 220 kDa (KIDINS220) of Homo sapiens (Human).